The following is a 601-amino-acid chain: Glutathione-regulated potassium-efflux system protein KefB (601 aa).

Helical transmembrane passes span 4-24 (ADLLTAGVLFLFAAVAAVPLA), 29-49 (IGAVLGYLLAGIAIGPWGLGF), 55-75 (EILHFSELGVVFLMFIIGLEL), 87-107 (IFGVGAAQVLLSAAVLAGLLM), 111-131 (FLWQAAVVGGIGLAMSSTAMA), 152-172 (VLLFQDLAVIPALALVPLLAG), 177-197 (HFDWFKVAMKVLAFAVMLIGG), 207-227 (FIAASGVREVFTAATLLLVLS), 230-250 (LFMDALGLSMALGTFIAGVLL), 262-282 (AIDPFKGLLLGLFFISVGMSL), 284-304 (LGVLYTHLLWVAASVVILVVI), 324-344 (MQFASVLSQGGEFAFVLFSTA), and 356-376 (ALLLVTVTLSMMTTPLLMKGI). Residues 400 to 519 (KPQVIVVGFG…AGVTQFSRET (120 aa)) enclose the RCK N-terminal domain.

This sequence belongs to the monovalent cation:proton antiporter 2 (CPA2) transporter (TC 2.A.37) family. KefB subfamily. In terms of assembly, interacts with the regulatory subunit KefG.

It is found in the cell inner membrane. In terms of biological role, pore-forming subunit of a potassium efflux system that confers protection against electrophiles. Catalyzes K(+)/H(+) antiport. This Salmonella paratyphi A (strain ATCC 9150 / SARB42) protein is Glutathione-regulated potassium-efflux system protein KefB.